A 425-amino-acid chain; its full sequence is Serine--tRNA ligase (425 aa).

230–232 (TAE) serves as a coordination point for L-serine. 261–263 (RSE) is a binding site for ATP. Glu284 lines the L-serine pocket. 348–351 (EISS) lines the ATP pocket. Ser384 is an L-serine binding site.

The protein belongs to the class-II aminoacyl-tRNA synthetase family. Type-1 seryl-tRNA synthetase subfamily. As to quaternary structure, homodimer. The tRNA molecule binds across the dimer.

It localises to the cytoplasm. The enzyme catalyses tRNA(Ser) + L-serine + ATP = L-seryl-tRNA(Ser) + AMP + diphosphate + H(+). The catalysed reaction is tRNA(Sec) + L-serine + ATP = L-seryl-tRNA(Sec) + AMP + diphosphate + H(+). It functions in the pathway aminoacyl-tRNA biosynthesis; selenocysteinyl-tRNA(Sec) biosynthesis; L-seryl-tRNA(Sec) from L-serine and tRNA(Sec): step 1/1. In terms of biological role, catalyzes the attachment of serine to tRNA(Ser). Is also able to aminoacylate tRNA(Sec) with serine, to form the misacylated tRNA L-seryl-tRNA(Sec), which will be further converted into selenocysteinyl-tRNA(Sec). The polypeptide is Serine--tRNA ligase (Streptococcus equi subsp. zooepidemicus (strain H70)).